The following is a 299-amino-acid chain: tRNA uridine(34) hydroxylase (299 aa).

The 95-residue stretch at 132–226 (AGRPVVMLDT…YFEEVGGAHY (95 aa)) folds into the Rhodanese domain. Catalysis depends on Cys186, which acts as the Cysteine persulfide intermediate.

The protein belongs to the TrhO family.

It catalyses the reaction uridine(34) in tRNA + AH2 + O2 = 5-hydroxyuridine(34) in tRNA + A + H2O. Functionally, catalyzes oxygen-dependent 5-hydroxyuridine (ho5U) modification at position 34 in tRNAs. The protein is tRNA uridine(34) hydroxylase of Burkholderia pseudomallei (strain 1106a).